Reading from the N-terminus, the 236-residue chain is Eukaryotic translation initiation factor 3 subunit K (236 aa).

The PCI domain maps to 42–222 (YDKDILVTTL…TIKSRNIEEK (181 aa)).

The protein belongs to the eIF-3 subunit K family. In terms of assembly, component of the eukaryotic translation initiation factor 3 (eIF-3) complex.

It is found in the cytoplasm. Functionally, component of the eukaryotic translation initiation factor 3 (eIF-3) complex, which is involved in protein synthesis of a specialized repertoire of mRNAs and, together with other initiation factors, stimulates binding of mRNA and methionyl-tRNAi to the 40S ribosome. The eIF-3 complex specifically targets and initiates translation of a subset of mRNAs involved in cell proliferation. This chain is Eukaryotic translation initiation factor 3 subunit K, found in Brugia malayi (Filarial nematode worm).